Consider the following 67-residue polypeptide: Photosystem II reaction center protein H (67 aa).

Residues Gly-27–Leu-47 traverse the membrane as a helical segment.

The protein belongs to the PsbH family. As to quaternary structure, PSII is composed of 1 copy each of membrane proteins PsbA, PsbB, PsbC, PsbD, PsbE, PsbF, PsbH, PsbI, PsbJ, PsbK, PsbL, PsbM, PsbT, PsbX, PsbY, Psb30/Ycf12, peripheral proteins PsbO, CyanoQ (PsbQ), PsbU, PsbV and a large number of cofactors. It forms dimeric complexes.

The protein resides in the cellular thylakoid membrane. One of the components of the core complex of photosystem II (PSII), required for its stability and/or assembly. PSII is a light-driven water:plastoquinone oxidoreductase that uses light energy to abstract electrons from H(2)O, generating O(2) and a proton gradient subsequently used for ATP formation. It consists of a core antenna complex that captures photons, and an electron transfer chain that converts photonic excitation into a charge separation. The polypeptide is Photosystem II reaction center protein H (Prochlorococcus marinus (strain SARG / CCMP1375 / SS120)).